We begin with the raw amino-acid sequence, 84 residues long: Minor capsid protein P30 (84 aa).

As to quaternary structure, dimer.

The protein localises to the virion. Minor capsid protein essential for stable capsid assembly of complete particles. The chain is Minor capsid protein P30 (XXX) from Enterobacteria phage PRD1 (Bacteriophage PRD1).